Here is a 371-residue protein sequence, read N- to C-terminus: Probable diguanylate cyclase DgcC (371 aa).

5 helical membrane-spanning segments follow: residues 46–66 (AVGL…HPPP), 68–88 (WWWL…WQIA), 112–132 (WVGV…IMCL), 143–163 (FVAG…LTGI), and 171–191 (PLEW…FGWV). A GGDEF domain is found at 240–371 (RDATLLIIDI…AGRNRTEVAA (132 aa)). Mg(2+)-binding residues include Asp-248 and Ile-249. Positions 256 and 265 each coordinate substrate. Asp-291 contributes to the Mg(2+) binding site.

Requires Mg(2+) as cofactor.

It localises to the cell inner membrane. It catalyses the reaction 2 GTP = 3',3'-c-di-GMP + 2 diphosphate. It functions in the pathway purine metabolism; 3',5'-cyclic di-GMP biosynthesis. In terms of biological role, a probable diguanylate cyclase. The last member of a cascade of expressed proteins, its expression requires DgcM. DgcC production induces biosynthesis of cellulose in some E.coli isolates, but not in K12 strains. Cyclic-di-GMP is a second messenger which controls cell surface-associated traits in bacteria. The sequence is that of Probable diguanylate cyclase DgcC from Escherichia coli (strain K12).